Reading from the N-terminus, the 467-residue chain is UDP-N-acetylmuramate--L-alanine ligase (467 aa).

Gly-114 to Thr-120 lines the ATP pocket.

The protein belongs to the MurCDEF family.

Its subcellular location is the cytoplasm. It carries out the reaction UDP-N-acetyl-alpha-D-muramate + L-alanine + ATP = UDP-N-acetyl-alpha-D-muramoyl-L-alanine + ADP + phosphate + H(+). Its pathway is cell wall biogenesis; peptidoglycan biosynthesis. In terms of biological role, cell wall formation. The polypeptide is UDP-N-acetylmuramate--L-alanine ligase (Bradyrhizobium sp. (strain ORS 278)).